A 276-amino-acid chain; its full sequence is Diaminopimelate epimerase (276 aa).

Substrate contacts are provided by asparagine 13, glutamine 46, and asparagine 66. Residue cysteine 75 is the Proton donor of the active site. Residues 76–77 (GN), asparagine 159, asparagine 192, and 210–211 (ER) contribute to the substrate site. Cysteine 219 (proton acceptor) is an active-site residue. 220–221 (GS) serves as a coordination point for substrate.

Belongs to the diaminopimelate epimerase family. Homodimer.

The protein resides in the cytoplasm. It catalyses the reaction (2S,6S)-2,6-diaminopimelate = meso-2,6-diaminopimelate. Its pathway is amino-acid biosynthesis; L-lysine biosynthesis via DAP pathway; DL-2,6-diaminopimelate from LL-2,6-diaminopimelate: step 1/1. Catalyzes the stereoinversion of LL-2,6-diaminopimelate (L,L-DAP) to meso-diaminopimelate (meso-DAP), a precursor of L-lysine and an essential component of the bacterial peptidoglycan. This Vibrio vulnificus (strain CMCP6) protein is Diaminopimelate epimerase.